Consider the following 150-residue polypeptide: MSDNAKTSATDIVQRIISLLTIILLAYFLFKEGLFSVDQRLLSLATIVLLASFLFIIFLVLFKWPLGNLNKKEIRRTIAIVTTSFYFGTLSMVLSGKLELTEEVGALIDGLKWAFMVVVAFYFGSRAVEDALKSKKSAEECPQNTDAEAG.

Helical transmembrane passes span 12–30 (IVQRIISLLTIILLAYFLF), 40–62 (RLLSLATIVLLASFLFIIFLVLF), 74–96 (IRRTIAIVTTSFYFGTLSMVLSG), and 106–128 (ALIDGLKWAFMVVVAFYFGSRAV).

It is found in the cell membrane. This is an uncharacterized protein from Archaeoglobus fulgidus (strain ATCC 49558 / DSM 4304 / JCM 9628 / NBRC 100126 / VC-16).